The following is a 229-amino-acid chain: MPPAEALEALRLMAWLSPGYPVGAYAYSHGLEWAVEAGDVRDEASLTAWLRDVCERGALRNDLILAAQAHAAARTSDGAALVAVNDLALALAPSRELHLETSQQGRSFLDATRGAWPCDALAALAEELPGPVAYPVAVGLAAGAHGMAPEPVLAAYGLAFLQNLVSAALRAAPVGQAAGTRVVAALAPRLAGLAEAAAASDLDALGAATFRLDLGSFRHETQYSRIFRS.

This sequence belongs to the UreF family. In terms of assembly, ureD, UreF and UreG form a complex that acts as a GTP-hydrolysis-dependent molecular chaperone, activating the urease apoprotein by helping to assemble the nickel containing metallocenter of UreC. The UreE protein probably delivers the nickel.

It localises to the cytoplasm. In terms of biological role, required for maturation of urease via the functional incorporation of the urease nickel metallocenter. The chain is Urease accessory protein UreF from Methylobacterium radiotolerans (strain ATCC 27329 / DSM 1819 / JCM 2831 / NBRC 15690 / NCIMB 10815 / 0-1).